The sequence spans 156 residues: Small ribosomal subunit protein uS7 (156 aa).

The protein belongs to the universal ribosomal protein uS7 family. Part of the 30S ribosomal subunit. Contacts proteins S9 and S11.

In terms of biological role, one of the primary rRNA binding proteins, it binds directly to 16S rRNA where it nucleates assembly of the head domain of the 30S subunit. Is located at the subunit interface close to the decoding center, probably blocks exit of the E-site tRNA. The sequence is that of Small ribosomal subunit protein uS7 from Bordetella bronchiseptica (strain ATCC BAA-588 / NCTC 13252 / RB50) (Alcaligenes bronchisepticus).